Consider the following 347-residue polypeptide: MSENSIRLTQYSHGAGCGCKISPKVLETILHSEQAKFVDPNLLVGNETRDDAAVYDLGNGTSVISTTDFFMPIVDNPFDFGRIAATNAISDIFAMGGKPIMAIAILGWPINKLSPEIAREVTEGGRYACRQAGIALAGGHSIDAPEPIFGLAVTGIVPTERVKKNSTAQAGCKLFLTKPLGIGVLTTAEKKSLLKPEHQGLATEVMCRMNIAGASFANIEGVKAMTDVTGFGLLGHLSEMCQGAGVQARVDYDAIPKLPGVEEYIKLGAVPGGTERNFASYGHLMGEMPREVRDLLCDPQTSGGLLLAVMPEAENEVKTTAAEFGIELTAIGELVPARGGRAMVEIR.

Cys-17 is a catalytic residue. ATP is bound by residues Lys-20 and 48–50; that span reads TRD. Asp-51 contacts Mg(2+). ATP is bound by residues Asp-68, Asp-91, and 139 to 141; that span reads GHS. Asp-91 is a Mg(2+) binding site. Asp-227 contributes to the Mg(2+) binding site.

The protein belongs to the selenophosphate synthase 1 family. Class I subfamily. Homodimer. The cofactor is Mg(2+).

It catalyses the reaction hydrogenselenide + ATP + H2O = selenophosphate + AMP + phosphate + 2 H(+). Synthesizes selenophosphate from selenide and ATP. The chain is Selenide, water dikinase from Escherichia coli O139:H28 (strain E24377A / ETEC).